The sequence spans 205 residues: Red chlorophyll catabolite reductase (205 aa).

Substrate contacts are provided by Glu-39 and Asp-175.

In terms of assembly, homodimer. The N-terminus is blocked. In terms of tissue distribution, in etiolated and green primary leaves. Low amount in roots.

Its subcellular location is the plastid. The protein localises to the chloroplast stroma. It catalyses the reaction primary fluorescent chlorophyll catabolite + 2 oxidized [2Fe-2S]-[ferredoxin] = red chlorophyll catabolite + 2 reduced [2Fe-2S]-[ferredoxin] + 3 H(+). It functions in the pathway porphyrin-containing compound metabolism; chlorophyll degradation. Its function is as follows. Catalyzes the key reaction of chlorophyll catabolism, porphyrin macrocycle cleavage of pheophorbide a (pheide a) to a primary fluorescent catabolite (pFCC). Works in a two-step reaction with pheophorbide a oxygenase (PaO) by reducing the C20/C1 double bond of the intermediate, RCC. The protein is Red chlorophyll catabolite reductase (rccR) of Hordeum vulgare (Barley).